The sequence spans 294 residues: Non-selective voltage-gated ion channel VDAC2 (294 aa).

N-acetylalanine is present on Ala2. 2 residues coordinate ATP: Lys23 and Lys31. An N6-acetyllysine; alternate modification is found at Lys31. N6-succinyllysine; alternate is present on Lys31. Residue Lys31 forms a Glycyl lysine isopeptide (Lys-Gly) (interchain with G-Cter in ubiquitin); alternate linkage. A run of 2 beta stranded transmembrane segments spans residues 37–46 (LVKLDVKTKS) and 50–58 (VEFSTSGSS). A Glycyl lysine isopeptide (Lys-Gly) (interchain with G-Cter in ubiquitin) cross-link involves residue Lys64. Residues 65 to 75 (VTGTLETKYKW) form a beta stranded membrane-spanning segment. Tyr78 carries the phosphotyrosine modification. 3 beta stranded membrane passes run 80-87 (LTFTEKWN), 91-100 (TLGTEIAIED), and 106-115 (LKLTFDTTFS). Thr118 is modified (phosphothreonine). At Lys120 the chain carries N6-acetyllysine; alternate. Lys120 is covalently cross-linked (Glycyl lysine isopeptide (Lys-Gly) (interchain with G-Cter in ubiquitin); alternate). A Glycyl lysine isopeptide (Lys-Gly) (interchain with G-Cter in ubiquitin) cross-link involves residue Lys121. The next 4 membrane-spanning stretches (beta stranded) occupy residues 122 to 131 (SGKIKSSYKR), 134 to 141 (INLGCDVD), 148 to 156 (AIHGSAVFG), and 161 to 169 (LAGYQMTFD). A Glycyl lysine isopeptide (Lys-Gly) (interchain with G-Cter in ubiquitin) cross-link involves residue Lys172. The next 6 beta stranded transmembrane spans lie at 174–186 (KLTR…GYRT), 189–196 (FQLHTNVN), 200–209 (EFGGSIYQKV), 213–222 (LDTSVNLAWT), 229–238 (RFGIAAKYQL), and 242–249 (ASISAKVN). Phosphoserine is present on Ser251. Residues 253-255 (LIG) and 271-275 (SALVD) each bind NAD(+). 2 consecutive transmembrane segments (beta stranded) span residues 253 to 262 (LIGVGYTQTL) and 265 to 274 (GVKLTLSALV). Lys277 bears the N6-acetyllysine; alternate mark. Lys277 is covalently cross-linked (Glycyl lysine isopeptide (Lys-Gly) (interchain with G-Cter in ubiquitin); alternate). The chain crosses the membrane as a beta stranded span at residues 284 to 293 (HKLGLALELE).

The protein belongs to the eukaryotic mitochondrial porin family. Monomer, homodimer and higher order oligomers; formation of higher order structures is necessary for scramblase activity. Interacts with ARMC12 in a TBC1D21-dependent manner. Interacts with KLC3. Interacts with SPATA33. Interacts with PPP3CC in a SPATA33-dependent manner. In terms of processing, ubiquitinated by PRKN during mitophagy, leading to its degradation and enhancement of mitophagy. Deubiquitinated by USP30.

The protein resides in the mitochondrion outer membrane. It is found in the membrane. The enzyme catalyses chloride(in) = chloride(out). The catalysed reaction is K(+)(in) = K(+)(out). It carries out the reaction a 1,2-diacyl-sn-glycero-3-phospho-L-serine(in) = a 1,2-diacyl-sn-glycero-3-phospho-L-serine(out). It catalyses the reaction a 1,2-diacyl-sn-glycero-3-phosphocholine(in) = a 1,2-diacyl-sn-glycero-3-phosphocholine(out). The enzyme catalyses a 1,2-diacyl-sn-glycero-3-phospho-(1D-myo-inositol)(in) = a 1,2-diacyl-sn-glycero-3-phospho-(1D-myo-inositol)(out). Non-selective voltage-gated ion channel that mediates the transport of anions and cations through the mitochondrion outer membrane and plasma membrane. The channel adopts an open conformation at zero mV and a closed conformation at both positive and negative potentials. There are two populations of channels; the main that functions in a lower open-state conductance with lower ion selectivity, that switch, in a voltage-dependent manner, from the open to a low-conducting 'closed' state and the other that has a normal ion selectivity in the typical high conductance, 'open' state. Binds various lipids, including the sphingolipid ceramide, the phospholipid phosphatidylcholine, and the sterols cholesterol and oxysterol. Binding of ceramide promotes the mitochondrial outer membrane permeabilization (MOMP) apoptotic pathway. In terms of biological role, catalyzes the scrambling of phospholipids across the outer mitochondrial membrane; the mechanism is unrelated to channel activity and is capable of translocating both anionic and zwitterionic phospholipids. In Bos taurus (Bovine), this protein is Non-selective voltage-gated ion channel VDAC2.